Consider the following 65-residue polypeptide: Beta-defensin 41 (65 aa).

The N-terminal stretch at 1-19 is a signal peptide; that stretch reads MKFHLFFFILLFGATILTA. 3 disulfides stabilise this stretch: Cys-35/Cys-63, Cys-42/Cys-56, and Cys-46/Cys-64.

Belongs to the beta-defensin family. As to expression, isoform 2 is epididymis-specific and expressed mainly in the proximal caput.

It is found in the secreted. In terms of biological role, has bactericidal activity. Its function is as follows. Isoform 2 may play a role in the antimicrobial protection of sperm and urogenital tract epithelia. The sequence is that of Beta-defensin 41 from Mus musculus (Mouse).